Here is a 1673-residue protein sequence, read N- to C-terminus: Leucine-rich repeat- and IQ domain-containing protein 1 (1673 aa).

2 disordered regions span residues I22–D48 and L189–F208. Residues N34–Y59 form an LRR 1 repeat. The stretch at Q216–K239 is one LRR 2 repeat. An IQ 1 domain is found at R291–E320. Residues R324–E374 are disordered. The span at A326–E374 shows a compositional bias: basic and acidic residues. The stretch at L491–A516 is one LRR 3 repeat. Disordered stretches follow at residues E544 to P658 and E679 to S702. 2 stretches are compositionally biased toward basic and acidic residues: residues T549–K567 and E588–E602. Over residues M603 to P629 the composition is skewed to polar residues. An LRR 4 repeat occupies L641–C665. The segment covering T647–E656 has biased composition (basic and acidic residues). LRR repeat units lie at residues C830–C852, T853–L873, E874–G894, C895–Y919, Q921–A939, P940–C961, G962–H983, V984–C1005, L1007–L1029, V1030–A1054, and P1067–G1090. Disordered regions lie at residues A1163–E1230 and P1308–R1330. Polar residues-rich tracts occupy residues D1168–S1226 and P1308–S1325. IQ domains follow at residues P1280–T1309 and R1340–D1369. Residues E1378–S1405 form an LRR 16 repeat.

The sequence is that of Leucine-rich repeat- and IQ domain-containing protein 1 (Lrriq1) from Mus musculus (Mouse).